The chain runs to 381 residues: MARTDEIIARTAPGHLNDHNLIDREVESLCDGMVKYEKRPAKRHDGSVAEGIYNAWIILDNPKQYNSYTTDMVKAIILAFRRASVDRSVNAVVFTGVGDKAFCTGGNTKEYAEYYAGNPQEYRQYMRLFNDMVSAILGCDKAVISRVNGMRIGGGQEIGMACDFSIAQDLANFGQAGPKHGSAAIGGATDFLPLMVGCEQAMVSGTLCEPFSAHKAARLGIICDVVPALKVGGKFVANPTVVTDRYLDEYGRVVHGEFKAGAAFKEGQGQIKEGEIDLSLLDEKVESLCTKLLETFPECMTKSLEELRKPKLHAWNLNKENSRAWLALNMMNEARTGFRAFNEGTKETGREIDFVKLRQGLAKGTPWTEELIESLMPTAQK.

It belongs to the enoyl-CoA hydratase/isomerase family. In terms of assembly, homohexamer.

The catalysed reaction is 6-oxocyclohex-1-ene-1-carbonyl-CoA + 2 H2O = 3-hydroxy-6-carboxyhexanoyl-CoA + H(+). It functions in the pathway aromatic compound metabolism; benzoyl-CoA degradation. Its function is as follows. Involved in the central benzoyl-CoA catabolism. Catalyzes the addition of one molecule of water to the double bond and the hydrolytic cleavage of C-C bond in the alicyclic ring, 6-oxocyclohex-1-ene-1-carbonyl-CoA (6-OCH-CoA) to yield 3-hydroxypimelyl-CoA. This chain is 6-oxocyclohex-1-ene-1-carbonyl-CoA hydrolase, found in Geobacter metallireducens (strain ATCC 53774 / DSM 7210 / GS-15).